A 379-amino-acid polypeptide reads, in one-letter code: Succinyl-diaminopimelate desuccinylase (379 aa).

Residue H70 coordinates Zn(2+). D72 is a catalytic residue. Position 103 (D103) interacts with Zn(2+). E137 functions as the Proton acceptor in the catalytic mechanism. Zn(2+)-binding residues include E138, E166, and H352.

This sequence belongs to the peptidase M20A family. DapE subfamily. As to quaternary structure, homodimer. Zn(2+) serves as cofactor. The cofactor is Co(2+).

It carries out the reaction N-succinyl-(2S,6S)-2,6-diaminopimelate + H2O = (2S,6S)-2,6-diaminopimelate + succinate. Its pathway is amino-acid biosynthesis; L-lysine biosynthesis via DAP pathway; LL-2,6-diaminopimelate from (S)-tetrahydrodipicolinate (succinylase route): step 3/3. In terms of biological role, catalyzes the hydrolysis of N-succinyl-L,L-diaminopimelic acid (SDAP), forming succinate and LL-2,6-diaminopimelate (DAP), an intermediate involved in the bacterial biosynthesis of lysine and meso-diaminopimelic acid, an essential component of bacterial cell walls. This Shewanella baltica (strain OS155 / ATCC BAA-1091) protein is Succinyl-diaminopimelate desuccinylase.